We begin with the raw amino-acid sequence, 182 residues long: NADH-quinone oxidoreductase subunit 9 (182 aa).

2 4Fe-4S ferredoxin-type domains span residues 43 to 73 (LTRH…VEPA) and 89 to 118 (KVYE…LGYD). The [4Fe-4S] cluster site is built by cysteine 53, cysteine 56, serine 57, cysteine 59, cysteine 63, cysteine 98, isoleucine 99, cysteine 101, cysteine 104, and cysteine 108.

The protein belongs to the complex I 23 kDa subunit family. As to quaternary structure, NDH-1 is composed of 15 different subunits, Nqo1 to Nqo15. The complex has a L-shaped structure, with the hydrophobic arm (subunits Nqo7, Nqo8 and Nqo10 to Nqo14) embedded in the membrane and the hydrophilic peripheral arm (subunits Nqo1 to Nqo6, Nqo9 and Nqo15) protruding into the bacterial cytoplasm. The hydrophilic domain contains all the redox centers. The cofactor is [4Fe-4S] cluster.

Its subcellular location is the cell membrane. It catalyses the reaction a quinone + NADH + 5 H(+)(in) = a quinol + NAD(+) + 4 H(+)(out). Functionally, NDH-1 shuttles electrons from NADH, via FMN and iron-sulfur (Fe-S) centers, to quinones in the respiratory chain. The immediate electron acceptor for the enzyme in this species is menaquinone. Couples the redox reaction to proton translocation (for every two electrons transferred, four hydrogen ions are translocated across the cytoplasmic membrane), and thus conserves the redox energy in a proton gradient required for the synthesis of ATP. The role of the Nqo9 subunit appears to provide a 'connecting chain' of two clusters between cluster N5 and the terminal cluster N2, and to stabilize the structure of the complex by interacting with other subunits. This is NADH-quinone oxidoreductase subunit 9 (nqo9) from Thermus thermophilus (strain ATCC 27634 / DSM 579 / HB8).